The chain runs to 313 residues: MPIRIPDQLPAADVLRTENIFVMSETRAAKQEIRPLRVLILNLMPKKIETETQFLRLLSNSPLQVNVELLRIDDRPSKNTPTEHLDNFYRQFEMVKNRNFDGLIITGAPLGLVQFEDVIYWDHLKTIMEWAKSHVTSTLYVCWAAQAGLKLLYDLPKKTRKEKLSGVYHHRIHKPYHPVLRGFDDSFLAPHSRYADFSPEYLAEHTDLDILATSDDAGVYLATTKDKRNVFVTGHPEYDPHTLHNEYIRDLGEGMEPAIPVNYYPNDNPDNPPIASWRSHGHLLFSNWLNYCVYQQTPYDLDHFSEEAFTKDE.

Residue Cys-142 is the Acyl-thioester intermediate of the active site. Substrate contacts are provided by Lys-163 and Ser-192. His-235 functions as the Proton acceptor in the catalytic mechanism. Glu-237 is an active-site residue. Arg-249 provides a ligand contact to substrate.

Belongs to the MetA family.

Its subcellular location is the cytoplasm. It catalyses the reaction L-homoserine + succinyl-CoA = O-succinyl-L-homoserine + CoA. The protein operates within amino-acid biosynthesis; L-methionine biosynthesis via de novo pathway; O-succinyl-L-homoserine from L-homoserine: step 1/1. Transfers a succinyl group from succinyl-CoA to L-homoserine, forming succinyl-L-homoserine. This is Homoserine O-succinyltransferase from Vibrio vulnificus (strain YJ016).